Reading from the N-terminus, the 227-residue chain is MSKNIRINEIPSGERPREKLLFYGAQFLSNEELLAIILRTGNKDSNVVELSYRIIHSVGGLNGLFKASAKELMEVKGVKEAKATQILAMCELYKRFKVSELTQVKISKPSDVAKLVLDELRMLRQEVLILINLDTKNKVISKKEIFKGGLNSSLVHPREIFREAVKDSAASIIICHNHPSGDPTPSRDDINITTRLKECGKMMGIELLDHLIIGDNRFISLKEKDIL.

Positions 105–227 constitute an MPN domain; sequence KISKPSDVAK…FISLKEKDIL (123 aa). Zn(2+) is bound by residues H176, H178, and D189. The short motif at 176 to 189 is the JAMM motif element; it reads HNHPSGDPTPSRDD.

It belongs to the UPF0758 family.

The chain is UPF0758 protein CPE2144 from Clostridium perfringens (strain 13 / Type A).